Reading from the N-terminus, the 141-residue chain is Nuclear transcription factor Y subunit B-1 (141 aa).

The interval 1 to 23 (MADTPSSPAGDGGESGGSVREQD) is disordered. Residue alanine 2 is modified to N-acetylalanine. A DNA-binding region spans residues 26–32 (LPIANIS). The interval 53–64 (VQECVSEFISFI) is subunit association domain (SAD). Positions 114-141 (DNKGSGKSGDGSNRDAGGGVSGEEMPSW) are disordered.

It belongs to the NFYB/HAP3 subunit family. As to quaternary structure, heterotrimeric transcription factor composed of three components, NF-YA, NF-YB and NF-YC. NF-YB and NF-YC must interact and dimerize for NF-YA association and DNA binding. Binds directly with DPB3-1. In terms of tissue distribution, ubiquitous. Predominantly expressed in leaves, flowers and siliques.

It localises to the nucleus. In terms of biological role, component of the NF-Y/HAP transcription factor complex. The NF-Y complex stimulates the transcription of various genes by recognizing and binding to a CCAAT motif in promoters. In Arabidopsis thaliana (Mouse-ear cress), this protein is Nuclear transcription factor Y subunit B-1.